Here is a 177-residue protein sequence, read N- to C-terminus: Biotin-dependent acetyl-/propionyl-coenzyme A carboxylase epsilon subunit (177 aa).

Residues 1-112 (MGTCPCESSE…TEKPLHPHEP (112 aa)) are disordered. A compositionally biased stretch (polar residues) spans 18-100 (VSGTNEVSDG…SDGNETNNPA (83 aa)).

As to quaternary structure, interacts with the AccA3/AccD5 biotin-dependent acyl-CoA carboxylase complex. Interacts with the AccA3/AccD6 complex. Is also part of the long-chain acyl-CoA carboxylase (LCC) complex, which is composed of AccA3, AccD4, AccD5 and AccE5. The four subunits are essential for activity, but AccD5, together with AccE5, probably plays a structural role rather than a catalytic one.

Its function is as follows. Stimulates activity of the AccA3/AccD5 biotin-dependent acyl-CoA carboxylase complex. Interacts with AccD5 and modulates its carboxylase activity for acetyl-CoA and propionyl-CoA. Inhibits activity of the AccA3/AccD6 complex. Is also required for the activity of the long-chain acyl-CoA carboxylase (LCC) complex. The polypeptide is Biotin-dependent acetyl-/propionyl-coenzyme A carboxylase epsilon subunit (Mycobacterium tuberculosis (strain ATCC 25618 / H37Rv)).